Consider the following 126-residue polypeptide: uncharacterized protein (126 aa).

The region spanning 19–126 is the HIT domain; sequence IFERIIEGAV…LGGGLLGSIA (108 aa). The Histidine triad motif motif lies at 111 to 115; the sequence is HLHIH.

This is an uncharacterized protein from Chlamydia muridarum (strain MoPn / Nigg).